The sequence spans 251 residues: 3-deoxy-manno-octulosonate cytidylyltransferase (251 aa).

It belongs to the KdsB family.

The protein localises to the cytoplasm. The catalysed reaction is 3-deoxy-alpha-D-manno-oct-2-ulosonate + CTP = CMP-3-deoxy-beta-D-manno-octulosonate + diphosphate. Its pathway is nucleotide-sugar biosynthesis; CMP-3-deoxy-D-manno-octulosonate biosynthesis; CMP-3-deoxy-D-manno-octulosonate from 3-deoxy-D-manno-octulosonate and CTP: step 1/1. The protein operates within bacterial outer membrane biogenesis; lipopolysaccharide biosynthesis. Functionally, activates KDO (a required 8-carbon sugar) for incorporation into bacterial lipopolysaccharide in Gram-negative bacteria. This chain is 3-deoxy-manno-octulosonate cytidylyltransferase, found in Brucella ovis (strain ATCC 25840 / 63/290 / NCTC 10512).